A 239-amino-acid polypeptide reads, in one-letter code: tRNA (guanine-N(7)-)-methyltransferase (239 aa).

4 residues coordinate S-adenosyl-L-methionine: Glu-69, Glu-94, Asp-121, and Asp-144. Residue Asp-144 is part of the active site. Substrate contacts are provided by residues Lys-148, Asp-180, and 217 to 220 (TNFE).

The protein belongs to the class I-like SAM-binding methyltransferase superfamily. TrmB family. As to quaternary structure, monomer.

The catalysed reaction is guanosine(46) in tRNA + S-adenosyl-L-methionine = N(7)-methylguanosine(46) in tRNA + S-adenosyl-L-homocysteine. The protein operates within tRNA modification; N(7)-methylguanine-tRNA biosynthesis. Its function is as follows. Catalyzes the formation of N(7)-methylguanine at position 46 (m7G46) in tRNA. The sequence is that of tRNA (guanine-N(7)-)-methyltransferase from Buchnera aphidicola subsp. Schizaphis graminum (strain Sg).